Consider the following 448-residue polypeptide: uncharacterized protein (448 aa).

At 1–50 (MAPEIFVKFKCASRDIKLLWASVFLRLLSYGLTNQVLTLFLNAINMTEDK) the chain is on the extracellular side. The helical transmembrane segment at 51–71 (IGLFMSLTLAGDVICSYILTW) threads the bilayer. Residues 72–93 (YADSWGRRRVLVYGCAMMLLSG) lie on the Cytoplasmic side of the membrane. A helical transmembrane segment spans residues 94–114 (LVFSFSENFTLLLVFAIFGVI). The Extracellular segment spans residues 115 to 146 (SPSSDEVGPFKSIEEAMIAHLSPHNARPEIYA). Residues 147 to 167 (IHALVGTIGSALGAIICGIFV) traverse the membrane as a helical segment. The Cytoplasmic segment spans residues 168–184 (DLLKRTGLAATDLQCYK). The chain crosses the membrane as a helical span at residues 185-205 (LVFLLYAFFAFCKMVIMLLLS). Over 206–260 (DATELDGHYEHTDCNEETAEPLDVNDETAPLMRQATHPEERSNKLSKETVSVLMK) the chain is Extracellular. Residues 261-281 (LLVIFMVDSLGSGFMTSGWMV) traverse the membrane as a helical segment. Residues 282–287 (YYYSKQ) are Cytoplasmic-facing. Residues 288–308 (FLMGSLALGTLFFITQLVMAS) form a helical membrane-spanning segment. Topologically, residues 309-333 (STIPSSIIARCFGPVRATLLVQIPS) are extracellular. The chain crosses the membrane as a helical span at residues 334–354 (GIFSILIPMAKNYLPLSILFL). Residues 355–386 (NLHFATTAMDVTPRQILLTNIIKPRDLTKVMG) lie on the Cytoplasmic side of the membrane. An ATP-binding site is contributed by 386–393 (GVVNIGKT). Residues 387–407 (VVNIGKTFARCVGPIFTGILA) form a helical membrane-spanning segment. Residues 408-416 (NNNYLWLCY) lie on the Extracellular side of the membrane. Residues 417–437 (IISGSLVITADLILACMFLGV) traverse the membrane as a helical segment. The Cytoplasmic portion of the chain corresponds to 438 to 448 (DAKIKKQMNRH).

The protein localises to the membrane. This is an uncharacterized protein from Saccharomyces cerevisiae (strain ATCC 204508 / S288c) (Baker's yeast).